The primary structure comprises 516 residues: MEAKPVAMEVEGVEAAGGKPRFRMPVDSDLKATEFWLFSFARPHMASFHMAWFSFFCCFVSTFAAPPLLPLIRDTLGLTATDIGNAGIASVSGAVFARLAMGTACDLVGPRLASASLILLTTPAVYCSSIIQSPSGYLLVRFFTGISLASFVSAQFWMSSMFSAPKVGLANGVAGGWGNLGGGAVQLLMPLVYEAIHKIGSTPFTAWRIAFFIPGLMQTFSAIAVLAFGQDMPGGNYGKLHKTGDMHKDSFGNVLRHALTNYRGWILALTYGYSFGVELTIDNVVHQYFYDRFDVNLQTAGLIAASFGMANIISRPGGGLLSDWLSSRYGMRGRLWGLWTVQTIGGVLCVVLGIVDFSFAASVAVMVLFSFFVQAACGLTFGIVPFVSRRSLGLISGMTGGGGNVGAVLTQYIFFHGTKYKTETGIKYMGLMIIACTLPVMLIYFPQWGGMLVGPRKGATAEEYYSREWSDHEREKGFNAASVRFAENSVREGGRSSANGGQPRHTVPVDASPAGV.

Transmembrane regions (helical) follow at residues W52 to I72, L76 to F96, L112 to Q132, F142 to F162, G172 to V192, I209 to G229, W265 to V285, T299 to G319, L335 to I354, V367 to V387, I395 to F415, and G425 to F445. The tract at residues S489–V516 is disordered.

The protein belongs to the major facilitator superfamily. Nitrate/nitrite porter (TC 2.A.1.8) family. In terms of assembly, heterotetramer composed of two NRT2.3 and two NAR2.1. Isoform 1 interacts with NAR2.1, but not isoform 2. Expressed in the stelar cells of both primary and lateral roots, particularly at the site of lateral root emergence, root-shoot junction zone, vascular tissues of adventitious root primordia, leaves, germ tips and seed scutellum.

The protein localises to the cell membrane. Functionally, involved in nitrate transport, but does not seem to be able to mediate transport by its own. Acts as a dual component transporter with NAR2.1. Imports nitrate with high affinity when expressed with NAR2.1 in a heterologous system (Xenopus oocytes). Plays a key role in long-distance nitrate transport from root to shoot particularly at low external nitrate supply. The sequence is that of High-affinity nitrate transporter 2.3 (NRT2.3) from Oryza sativa subsp. japonica (Rice).